A 51-amino-acid polypeptide reads, in one-letter code: Light-harvesting protein B800/850/890 beta-2 chain (51 aa).

The Cytoplasmic portion of the chain corresponds to 1–17 (ADEMRNVSDEEAKEFHA). 2 residues coordinate a bacteriochlorophyll: His-16 and His-34. Residues 18–40 (MFSQAFTVYVGVAVVAHILAWAW) form a helical membrane-spanning segment. The Periplasmic portion of the chain corresponds to 41 to 51 (RPWIPGDEGFG).

This sequence belongs to the antenna complex beta subunit family. As to quaternary structure, the core complex is formed by different alpha and beta chains, binding bacteriochlorophyll molecules, and arranged most probably in tetrameric structures disposed around the reaction center. The non-pigmented gamma chains may constitute additional components.

The protein resides in the cell inner membrane. Functionally, antenna complexes are light-harvesting systems, which transfer the excitation energy to the reaction centers. The sequence is that of Light-harvesting protein B800/850/890 beta-2 chain from Halorhodospira halophila (strain DSM 244 / SL1) (Ectothiorhodospira halophila (strain DSM 244 / SL1)).